The primary structure comprises 362 residues: MAQVYNFSSGPAMLPAEVLKLAQQELCDWHGLGTSVMEISHRGKEFIQVAEEAEQDFRSLLNIPSNYKVLFCHGGGRGQFAGIPLNILGDKNVADYVDAGYWAASAVKEAKKYCAPNVIDAKITVDGKRAVTPMSEWQLTPGAAYLHYCPNETIDGIAIDDTPNFGDDVIVAADFSSTILSREIDVNRFGVIYAGAQKNIGPAGLTLVIVREDLLGKASVACPSILDYTVLSENDSMFNTPPTFAWYLAGLVFKWLKQQGGVAAMDKINQQKAELLYGVIDNSGFYRNDVAQANRSRMNVPFQLADSALDKLFLEESFAAGLHALKGHRVVGGMRASIYNAMPLDGVKALTDFMLDFERRHG.

Residues Ser-9 and Arg-42 each coordinate L-glutamate. Residues 76–77 (GR), Trp-102, Thr-153, Asp-174, and Gln-197 contribute to the pyridoxal 5'-phosphate site. Lys-198 bears the N6-(pyridoxal phosphate)lysine mark. Residue 239 to 240 (NT) participates in pyridoxal 5'-phosphate binding.

The protein belongs to the class-V pyridoxal-phosphate-dependent aminotransferase family. SerC subfamily. As to quaternary structure, homodimer. Requires pyridoxal 5'-phosphate as cofactor.

The protein localises to the cytoplasm. It catalyses the reaction O-phospho-L-serine + 2-oxoglutarate = 3-phosphooxypyruvate + L-glutamate. It carries out the reaction 4-(phosphooxy)-L-threonine + 2-oxoglutarate = (R)-3-hydroxy-2-oxo-4-phosphooxybutanoate + L-glutamate. Its pathway is amino-acid biosynthesis; L-serine biosynthesis; L-serine from 3-phospho-D-glycerate: step 2/3. It participates in cofactor biosynthesis; pyridoxine 5'-phosphate biosynthesis; pyridoxine 5'-phosphate from D-erythrose 4-phosphate: step 3/5. Functionally, catalyzes the reversible conversion of 3-phosphohydroxypyruvate to phosphoserine and of 3-hydroxy-2-oxo-4-phosphonooxybutanoate to phosphohydroxythreonine. This is Phosphoserine aminotransferase from Klebsiella pneumoniae (strain 342).